A 709-amino-acid polypeptide reads, in one-letter code: Leucine-rich repeat and calponin homology domain-containing protein 1 (709 aa).

Basic residues predominate over residues 24-37; it reads LHQHHQHHQHHQHH. Residues 24–49 are disordered; that stretch reads LHQHHQHHQHHQHHGGTGGTGFNLPL. LRR repeat units lie at residues 60-83, 86-108, 109-131, 132-155, 157-176, 177-199, 200-223, 225-244, and 245-268; these read AANS…TAPG, LSDT…ELCQ, FVSL…AIVN, LQML…LCGL, LKVL…EIGQ, LKQL…QIGQ, LKSL…LVDL, LVKF…CFRE, and MKQL…ICTK. Basic and acidic residues-rich tracts occupy residues 301–312 and 381–390; these read HQHVEDSKKDSD and QEREQLAGRA. The disordered stretch occupies residues 301-390; sequence HQHVEDSKKD…QEREQLAGRA (90 aa). Residues serine 395, serine 518, and serine 522 each carry the phosphoserine modification. The interval 504-526 is disordered; the sequence is SNGSQYSPNEIRENSPSVSPTAN. Threonine 581 bears the Phosphothreonine mark. The region spanning 589–702 is the Calponin-homology (CH) domain; it reads MREEKELVEQ…TTVQALLDVT (114 aa).

Interacts (via LRR repeats) with unphosphorylated DOCK8 (via DHR-2 domain); the interaction prevents the association between DOCK8 and CDC42.

The protein resides in the cytoplasm. In terms of biological role, acts as a negative regulator of GTPase CDC42 by sequestering CDC42-guanine exchange factor DOCK8. Probably by preventing CDC42 activation, negatively regulates CD4(+) T-cell migration in response to chemokine stimulation. This Mus musculus (Mouse) protein is Leucine-rich repeat and calponin homology domain-containing protein 1 (Lrch1).